The chain runs to 201 residues: FMN-dependent NADH:quinone oxidoreductase (201 aa).

FMN-binding positions include S10, 16–18, 96–99, and 140–143; these read SQS, MYNF, and SRGG.

Belongs to the azoreductase type 1 family. Homodimer. Requires FMN as cofactor.

It catalyses the reaction 2 a quinone + NADH + H(+) = 2 a 1,4-benzosemiquinone + NAD(+). The catalysed reaction is N,N-dimethyl-1,4-phenylenediamine + anthranilate + 2 NAD(+) = 2-(4-dimethylaminophenyl)diazenylbenzoate + 2 NADH + 2 H(+). Functionally, quinone reductase that provides resistance to thiol-specific stress caused by electrophilic quinones. In terms of biological role, also exhibits azoreductase activity. Catalyzes the reductive cleavage of the azo bond in aromatic azo compounds to the corresponding amines. This chain is FMN-dependent NADH:quinone oxidoreductase, found in Yersinia enterocolitica serotype O:8 / biotype 1B (strain NCTC 13174 / 8081).